The following is a 541-amino-acid chain: FAD-linked oxidoreductase pynB (541 aa).

The first 20 residues, 1-20 (MRLSARGFVWSALLACTASA), serve as a signal peptide directing secretion. N-linked (GlcNAc...) asparagine glycans are attached at residues Asn-30, Asn-57, Asn-117, Asn-131, Asn-158, Asn-253, Asn-306, Asn-343, Asn-430, and Asn-461. The region spanning 71 to 242 (FNEFPALIAY…VDFDLQLMQF (172 aa)) is the FAD-binding PCMH-type domain.

This sequence belongs to the oxygen-dependent FAD-linked oxidoreductase family. Requires FAD as cofactor.

Its pathway is secondary metabolite biosynthesis. Its function is as follows. FAD-linked oxidoreductase; part of the gene cluster that mediates the biosynthesis of pyranonigrins, a family of antioxidative compounds. The first step of pyranonigrins biosynthesis is performed by the hybrid PKS-NRPS synthetase that condenses 6 malonyl-CoA units to an acetyl starter unit, to form a 1,3,5-trioxotetradecane-6,8-dienyl-ACP. The enoyl reductase (ER) domain of pynA is likely to be functional during the first two rounds of polyketide chain extension, to generate the saturated C-C bonds of the alkyl side chain. PynA subsequently forms the amide bond between the acyl chain and L-serine. Although pynA has a terminal reductase domain, it appears to require the thioesterase pynI for the release of the straight-chain intermediate from pynA via the formation of a tetramic acid pyranonigrin J. The methyltransferase pynC then coverts pyranonigrin J to pyranonigrin I via N-methylation. The FAD-dependent monooxygenase pynG catalyzes an epoxidation-mediated cyclization to form the dihydro-gamma-pyrone moiety, followed by pynD-catalyzed oxidation of the alcohol to the ketone and enolization to yield the characteristic tetramic acid-fused gamma-pyrone core of pyranonigrin H. Pyranonigrin H is substrate of pynH for dehydration-mediated exo-methylene formation from the serine side chain to produce pyranonigrin E, before the oxidase pynE reduces the exo-methylene of pyranonigrin E into a pendant methyl to form pyranonigrin G. The FAD-linked oxidoreductase pynB performs the reverse reaction and converts pyranonigrin G back to pyranonigrin E. The sequence is that of FAD-linked oxidoreductase pynB from Aspergillus niger (strain ATCC MYA-4892 / CBS 513.88 / FGSC A1513).